Consider the following 202-residue polypeptide: 3-isopropylmalate dehydratase small subunit (202 aa).

It belongs to the LeuD family. LeuD type 1 subfamily. In terms of assembly, heterodimer of LeuC and LeuD.

The catalysed reaction is (2R,3S)-3-isopropylmalate = (2S)-2-isopropylmalate. The protein operates within amino-acid biosynthesis; L-leucine biosynthesis; L-leucine from 3-methyl-2-oxobutanoate: step 2/4. In terms of biological role, catalyzes the isomerization between 2-isopropylmalate and 3-isopropylmalate, via the formation of 2-isopropylmaleate. In Novosphingobium aromaticivorans (strain ATCC 700278 / DSM 12444 / CCUG 56034 / CIP 105152 / NBRC 16084 / F199), this protein is 3-isopropylmalate dehydratase small subunit.